Consider the following 61-residue polypeptide: Double gene block protein 1 (61 aa).

The disordered stretch occupies residues 1–45; sequence MDIESEVPVVGKQMLAGNRGKQKTRRSVAKDAIRKPASDSTNGGN. The segment at 17-35 is RNA-binding; that stretch reads GNRGKQKTRRSVAKDAIRK. The segment covering 28 to 37 has biased composition (basic and acidic residues); sequence VAKDAIRKPA.

It belongs to the carmovirus double gene block protein 1 family. As to quaternary structure, homodimer.

Its function is as follows. Cell-to-cell movement. Displays RNA-binding activity. The sequence is that of Double gene block protein 1 from Carnation mottle virus (CarMV).